The primary structure comprises 427 residues: Phosphatase PSR1 (427 aa).

S-palmitoyl cysteine attachment occurs at residues cysteine 9 and cysteine 10. Polar residues predominate over residues threonine 14–asparagine 34. A disordered region spans residues threonine 14–glutamate 223. Basic residues predominate over residues arginine 35–glycine 48. Residues valine 49 to asparagine 80 show a composition bias toward polar residues. Positions lysine 104–lysine 118 are enriched in basic and acidic residues. A Phosphoserine modification is found at serine 110. Acidic residues predominate over residues tyrosine 119 to glutamate 130. Residues aspartate 131 to arginine 151 are compositionally biased toward basic and acidic residues. A Glycyl lysine isopeptide (Lys-Gly) (interchain with G-Cter in ubiquitin) cross-link involves residue lysine 154. The segment covering glutamine 155 to glutamine 183 has biased composition (low complexity). A compositionally biased stretch (polar residues) spans arginine 184 to serine 214. Residues serine 253–leucine 411 enclose the FCP1 homology domain.

Interacts with WHI2.

It localises to the cell membrane. In terms of biological role, has phosphatase activity in vitro. Involved in the response to sodium and lithium ion stress (but not to potassium or sorbitol stress) by inducing transcription of the sodium pump ENA1/PMR2. Acts through a calcineurin-independent pathway and is functionally redundant with PSR2. Also involved in the general stress response; acts together with WHI2 to activate stress response element (STRE)-mediated gene expression, possibly through dephosphorylation of MSN2. This chain is Phosphatase PSR1 (PSR1), found in Saccharomyces cerevisiae (strain ATCC 204508 / S288c) (Baker's yeast).